The following is a 228-amino-acid chain: Ribose-5-phosphate isomerase A (228 aa).

Residues Thr27–Thr30, Asp86–Asp89, and Lys100–Gly103 contribute to the substrate site. Glu109 acts as the Proton acceptor in catalysis. Lys127 is a substrate binding site.

The protein belongs to the ribose 5-phosphate isomerase family. Homodimer.

It carries out the reaction aldehydo-D-ribose 5-phosphate = D-ribulose 5-phosphate. It functions in the pathway carbohydrate degradation; pentose phosphate pathway; D-ribose 5-phosphate from D-ribulose 5-phosphate (non-oxidative stage): step 1/1. Functionally, catalyzes the reversible conversion of ribose-5-phosphate to ribulose 5-phosphate. In Borrelia hermsii (strain HS1 / DAH), this protein is Ribose-5-phosphate isomerase A.